Reading from the N-terminus, the 485-residue chain is MTITPQQLIALLPLLIVGLTVVVVMLCIAWRRNHFINSTLTVIGINLALLSLWFVTQNGPMDVTPLMRVDGFSMFYTGLVLVASLATSTLAYAWLAGYPGNRDEFYLLVLIATMGGILLASANHLAALFLGIELISLPLFGMVGYAFRQKRSLEASIKYTLLSAAAASFLLFGMALVYAQTGQLSFTALGQTLNDTMLTQPVLLAGLGMMVVGLGFKLSLVPFHLWTPDVYQGAPVPVSTFLATASKIAIFAVVMRLFLYAPVTHSDTVRLVLAIIAFASMLFGNLMALSQSNIKRVLGYSSIAHLGYLLVGLIVVQAHTLALETVGVYLAGYLFASLGAFGVVSLMSSTYTGEDADSLYSYRGLFWHKPLLSSVLTVMMLSLAGIPMTLGFIGKFYVIALGVNSHLGWLTGAVVAGSAIGLFYYLRIMVSLYLSPPENLRRDMPSNWALTAGGVVVLISSLLVLLLGLYPQPLITLVQLAYPIL.

Helical transmembrane passes span 8–28 (LIALLPLLIVGLTVVVVMLCI), 35–55 (FINSTLTVIGINLALLSLWFV), 75–95 (FYTGLVLVASLATSTLAYAWL), 105–125 (FYLLVLIATMGGILLASANHL), 127–147 (ALFLGIELISLPLFGMVGYAF), 159–179 (YTLLSAAAASFLLFGMALVYA), 203–223 (LLAGLGMMVVGLGFKLSLVPF), 235–255 (PVPVSTFLATASKIAIFAVVM), 271–291 (LVLAIIAFASMLFGNLMALSQ), 303–323 (IAHLGYLLVGLIVVQAHTLAL), 326–346 (VGVYLAGYLFASLGAFGVVSL), 371–393 (LLSSVLTVMMLSLAGIPMTLGFI), 406–426 (HLGWLTGAVVAGSAIGLFYYL), and 449–469 (ALTAGGVVVLISSLLVLLLGL).

This sequence belongs to the complex I subunit 2 family. In terms of assembly, NDH-1 is composed of 13 different subunits. Subunits NuoA, H, J, K, L, M, N constitute the membrane sector of the complex.

The protein resides in the cell inner membrane. The catalysed reaction is a quinone + NADH + 5 H(+)(in) = a quinol + NAD(+) + 4 H(+)(out). NDH-1 shuttles electrons from NADH, via FMN and iron-sulfur (Fe-S) centers, to quinones in the respiratory chain. The immediate electron acceptor for the enzyme in this species is believed to be ubiquinone. Couples the redox reaction to proton translocation (for every two electrons transferred, four hydrogen ions are translocated across the cytoplasmic membrane), and thus conserves the redox energy in a proton gradient. The sequence is that of NADH-quinone oxidoreductase subunit N from Sodalis glossinidius (strain morsitans).